Reading from the N-terminus, the 118-residue chain is Cell division protein FtsB (118 aa).

At methionine 1 to tryptophan 6 the chain is on the cytoplasmic side. Residues leucine 7 to phenylalanine 24 traverse the membrane as a helical segment. Residues glycine 25–arginine 118 are Periplasmic-facing. Residues glycine 30–glycine 66 adopt a coiled-coil conformation. Residues leucine 98–arginine 118 are disordered. The segment covering serine 103–arginine 118 has biased composition (basic and acidic residues).

It belongs to the FtsB family. Part of a complex composed of FtsB, FtsL and FtsQ.

It localises to the cell inner membrane. Functionally, essential cell division protein. May link together the upstream cell division proteins, which are predominantly cytoplasmic, with the downstream cell division proteins, which are predominantly periplasmic. The chain is Cell division protein FtsB from Xylella fastidiosa (strain M12).